The following is a 251-amino-acid chain: CDP-diacylglycerol pyrophosphatase (251 aa).

The helical transmembrane segment at 5-25 threads the bilayer; that stretch reads GYFLLAVIVIVAAAGVGYWKF.

Belongs to the Cdh family.

The protein localises to the cell inner membrane. The enzyme catalyses a CDP-1,2-diacyl-sn-glycerol + H2O = a 1,2-diacyl-sn-glycero-3-phosphate + CMP + 2 H(+). The protein operates within phospholipid metabolism; CDP-diacylglycerol degradation; phosphatidate from CDP-diacylglycerol: step 1/1. The chain is CDP-diacylglycerol pyrophosphatase from Salmonella typhi.